The following is a 722-amino-acid chain: Host cell factor 2 (722 aa).

Kelch repeat units follow at residues 34–79 (LMII…GFVC), 83–130 (RILV…RLGH), 207–255 (KMYV…VIGN), and 257–303 (MYIF…VSDS). Fibronectin type-III domains follow at residues 359-460 (APSQ…VDSS), 514-604 (TPSN…TCTP), and 606-716 (FPGA…DQEK). Residues 398–476 (ATSSDSSAAP…LAPNTSNNSS (79 aa)) are disordered. Residues 419–436 (QGSNSTLHNSVSDTVNST) are compositionally biased toward polar residues.

In terms of assembly, binds KMT2A/MLL1. Component of the MLL1/MLL complex, at least composed of KMT2A/MLL1, ASH2L, RBBP5, DPY30, WDR5, MEN1, HCFC1 and HCFC2. Interacts with TASOR. As to expression, expressed in the spermatogonia, spermatocytes and ovary.

It localises to the cytoplasm. The protein resides in the nucleus. The polypeptide is Host cell factor 2 (Hcfc2) (Mus musculus (Mouse)).